The following is a 565-amino-acid chain: NAD-dependent malic enzyme (565 aa).

Tyr-104 serves as the catalytic Proton donor. Arg-157 serves as a coordination point for NAD(+). Residue Lys-175 is the Proton acceptor of the active site. Residues Glu-246, Asp-247, and Asp-270 each contribute to the a divalent metal cation site. Residues Asp-270 and Asn-418 each contribute to the NAD(+) site.

This sequence belongs to the malic enzymes family. Homotetramer. Requires Mg(2+) as cofactor. Mn(2+) serves as cofactor.

The catalysed reaction is (S)-malate + NAD(+) = pyruvate + CO2 + NADH. It catalyses the reaction oxaloacetate + H(+) = pyruvate + CO2. The protein is NAD-dependent malic enzyme of Escherichia coli O9:H4 (strain HS).